Consider the following 610-residue polypeptide: Pentatricopeptide repeat-containing protein At5g40400 (610 aa).

PPR repeat units follow at residues 165–199 (DPVVFDMLVKGYLKLGLVEEGFRVFREVLDSGFSV), 200–234 (SVVTCNHLLNGLLKLDLMEDCWQVYSVMCRVGIHP), 235–269 (NTYTFNILTNVFCNDSNFREVDDFLEKMEEEGFEP), 270–304 (DLVTYNTLVSSYCRRGRLKEAFYLYKIMYRRRVVP), 305–339 (DLVTYTSLIKGLCKDGRVREAHQTFHRMVDRGIKP), 340–374 (DCMSYNTLIYAYCKEGMMQQSKKLLHEMLGNSVVP), 375–409 (DRFTCKVIVEGFVREGRLLSAVNFVVELRRLKVDI), 410–445 (PFEVCDFLIVSLCQEGKPFAAKHLLDRIIEEEGHEA), 446–480 (KPETYNNLIESLSRCDAIEEALVLKGKLKNQNQVL), 481–515 (DAKTYRALIGCLCRIGRNREAESLMAEMFDSEVKP), 516–546 (DSFICGALVYGYCKELDFDKAERLLSLFAME), and 551–586 (DPESYNSLVKAVCETGCGYKKALELQERMQRLGFVP).

Belongs to the PPR family. P subfamily.

This is Pentatricopeptide repeat-containing protein At5g40400 from Arabidopsis thaliana (Mouse-ear cress).